The sequence spans 723 residues: MLSSMAAAGSVKAALQVAEVLEAIVSCCVGPEGRQVLCTKPTGEVLLSRNGGRLLEALHLEHPIARMIVDCVSSHLKKTGDGAKTFIIFLCHLLRGLHAITDREKDPLMCENIQTHGRHWKNCSRWKFISQALLTFQTQILDGIMDQYLSRHFLSIFSSAKERTLCRSSLELLLEAYFCGRVGRNNHKFISQLMCDYFFKCMTCKSGIGVFELVDDHFVELNVGVTGLPVSDSRIIAGLVLQKDFSVYRPADGDMRMVIVTETIQPLFSTSGSEFILNSEAQFQTSQFWIMEKTKAIMKHLHSQNVKLLISSVKQPDLVSYYAGVNGISVVECLSSEEVSLIRRIIGLSPFVPPQAFSQCEIPNTALVKFCKPLILRSKRYVHLGLISTCAFIPHSIVLCGPVHGLIEQHEDALHGALKMLRQLFKDLDLNYMTQTNDQNGTSSLFIYKNSGESYQAPDPGNGSIQRPYQDTVAENKDALEKTQTYLKVHSNLVIPDVELETYIPYSTPTLTPTDTFQTVETLTCLSLERNRLTDYYEPLLKNNSTAYSTRGNRIEISYENLQVTNITRKGSMLPVSCKLPNMGTSQSYLSSSMPAGCVLPVGGNFEILLHYYLLNYAKKCHQSEETMVSMIIANALLGIPKVLYKSKTGKYSFPHTYIRAVHALQTNQPLVSSQTGLESVMGKYQLLTSVLQCLTKILTIDMVITVKRHPQKVHNQDSEDEL.

The protein belongs to the TCP-1 chaperonin family. In terms of assembly, component of a complex composed at least of MKKS, BBS10, BBS12, TCP1, CCT2, CCT3, CCT4, CCT5 and CCT8.

It localises to the cell projection. The protein localises to the cilium. In terms of biological role, probable molecular chaperone that assists the folding of proteins upon ATP hydrolysis. Plays a role in the assembly of BBSome, a complex involved in ciliogenesis regulating transports vesicles to the cilia. Involved in adipogenic differentiation. This chain is BBSome complex assembly protein BBS10 (BBS10), found in Homo sapiens (Human).